Consider the following 131-residue polypeptide: Fumarate reductase subunit C (131 aa).

3 helical membrane passes run 30–50 (EGTA…LFAL), 57–77 (WMGF…LIAL), and 109–129 (IIKG…YVAL).

This sequence belongs to the FrdC family. In terms of assembly, part of an enzyme complex containing four subunits: a flavoprotein (FrdA), an iron-sulfur protein (FrdB), and two hydrophobic anchor proteins (FrdC and FrdD).

It localises to the cell inner membrane. Functionally, two distinct, membrane-bound, FAD-containing enzymes are responsible for the catalysis of fumarate and succinate interconversion; fumarate reductase is used in anaerobic growth, and succinate dehydrogenase is used in aerobic growth. Anchors the catalytic components of the fumarate reductase complex to the cell inner membrane, binds quinones. In Citrobacter koseri (strain ATCC BAA-895 / CDC 4225-83 / SGSC4696), this protein is Fumarate reductase subunit C.